We begin with the raw amino-acid sequence, 487 residues long: Protein nucleotidyltransferase YdiU (487 aa).

ATP contacts are provided by glycine 86, glycine 88, arginine 89, lysine 109, aspartate 121, glycine 122, arginine 172, and arginine 179. Aspartate 248 acts as the Proton acceptor in catalysis. Asparagine 249 and aspartate 258 together coordinate Mg(2+). Residue aspartate 258 coordinates ATP.

The protein belongs to the SELO family. Requires Mg(2+) as cofactor. It depends on Mn(2+) as a cofactor.

It carries out the reaction L-seryl-[protein] + ATP = 3-O-(5'-adenylyl)-L-seryl-[protein] + diphosphate. The catalysed reaction is L-threonyl-[protein] + ATP = 3-O-(5'-adenylyl)-L-threonyl-[protein] + diphosphate. It catalyses the reaction L-tyrosyl-[protein] + ATP = O-(5'-adenylyl)-L-tyrosyl-[protein] + diphosphate. The enzyme catalyses L-histidyl-[protein] + UTP = N(tele)-(5'-uridylyl)-L-histidyl-[protein] + diphosphate. It carries out the reaction L-seryl-[protein] + UTP = O-(5'-uridylyl)-L-seryl-[protein] + diphosphate. The catalysed reaction is L-tyrosyl-[protein] + UTP = O-(5'-uridylyl)-L-tyrosyl-[protein] + diphosphate. Nucleotidyltransferase involved in the post-translational modification of proteins. It can catalyze the addition of adenosine monophosphate (AMP) or uridine monophosphate (UMP) to a protein, resulting in modifications known as AMPylation and UMPylation. This chain is Protein nucleotidyltransferase YdiU, found in Sphingopyxis alaskensis (strain DSM 13593 / LMG 18877 / RB2256) (Sphingomonas alaskensis).